Reading from the N-terminus, the 229-residue chain is UPF0128 protein aq_756 (229 aa).

The protein belongs to the UPF0128 family.

The chain is UPF0128 protein aq_756 from Aquifex aeolicus (strain VF5).